A 517-amino-acid chain; its full sequence is MALTLASAADLLKEHHLLREIIQGDVWTDDPARIASADEPFAGITYDTRKVTPGTLLCCKGQFKAEYLNGIDEAGLAAYVAETEYSAATATPGLIVNDARKAMSLLSAAFYGYPQNELTVIGVTGTKGKTTTSYFTQALINAVSGGKAALFSSVDNCLDGHTYVESDLTTPESMDAFRMMREAADNGMKYLVMEVSSQAYKVDRVYGLTFDVAAFLNISPDHISPIEHPTFEDYLYCKRQIIVNAKSLVLGADSLHADLLREDAEAAGIGVTTFALHDADNAGTSADVVAWPADPAHASFHIADGDQALGDYHLSIDGDFNYLNAAAAIAIAHAVGVSLDDADALHAIESVRIAGRMEQFRDPQSNTLAIVDYAHNYASVTALLDFVYERWGEENPRITLVTGSAGNKAYDRRKEIVEAAENRIANFIFTAEDTDTEPIIDICMEMQGYITNKDVVSTVISDRLTAITNAIYDARAHADRFNILLIIGKGNERWIKDHRKHVPFDGDDHVVERMFGL.

Thr48 serves as a coordination point for UDP-N-acetyl-alpha-D-muramoyl-L-alanyl-D-glutamate. 125-131 (GTKGKTT) contacts ATP. Residues 169 to 170 (TT), Ser196, and Arg204 contribute to the UDP-N-acetyl-alpha-D-muramoyl-L-alanyl-D-glutamate site. At Lys238 the chain carries N6-carboxylysine.

The protein belongs to the MurCDEF family. MurE subfamily. Post-translationally, carboxylation is probably crucial for Mg(2+) binding and, consequently, for the gamma-phosphate positioning of ATP.

The protein localises to the cytoplasm. It participates in cell wall biogenesis; peptidoglycan biosynthesis. Functionally, catalyzes the addition of an amino acid to the nucleotide precursor UDP-N-acetylmuramoyl-L-alanyl-D-glutamate (UMAG) in the biosynthesis of bacterial cell-wall peptidoglycan. The protein is UDP-N-acetylmuramyl-tripeptide synthetase of Bifidobacterium longum (strain NCC 2705).